Here is a 446-residue protein sequence, read N- to C-terminus: Signal recognition particle 54 kDa protein (446 aa).

GTP contacts are provided by residues 103-110 (GVQGTGKT), 185-189 (DTAGR), and 245-248 (TKMD).

Belongs to the GTP-binding SRP family. SRP54 subfamily. As to quaternary structure, part of the signal recognition particle protein translocation system, which is composed of SRP and FtsY. Archaeal SRP consists of a 7S RNA molecule of 300 nucleotides and two protein subunits: SRP54 and SRP19.

The protein localises to the cytoplasm. The enzyme catalyses GTP + H2O = GDP + phosphate + H(+). Its function is as follows. Involved in targeting and insertion of nascent membrane proteins into the cytoplasmic membrane. Binds to the hydrophobic signal sequence of the ribosome-nascent chain (RNC) as it emerges from the ribosomes. The SRP-RNC complex is then targeted to the cytoplasmic membrane where it interacts with the SRP receptor FtsY. This Metallosphaera sedula (strain ATCC 51363 / DSM 5348 / JCM 9185 / NBRC 15509 / TH2) protein is Signal recognition particle 54 kDa protein.